The sequence spans 368 residues: Protein-glutamate methylesterase/protein-glutamine glutaminase (368 aa).

The Response regulatory domain occupies 9–126 (RVLVVDDSAF…SINMRELKDE (118 aa)). Residue aspartate 60 is modified to 4-aspartylphosphate. One can recognise a CheB-type methylesterase domain in the interval 161–354 (SVPARIAVAI…ETVVRAVEMI (194 aa)). Residues serine 173, histidine 200, and aspartate 296 contribute to the active site.

The protein belongs to the CheB family. Post-translationally, phosphorylated by CheA. Phosphorylation of the N-terminal regulatory domain activates the methylesterase activity.

The protein localises to the cytoplasm. It catalyses the reaction [protein]-L-glutamate 5-O-methyl ester + H2O = L-glutamyl-[protein] + methanol + H(+). The catalysed reaction is L-glutaminyl-[protein] + H2O = L-glutamyl-[protein] + NH4(+). In terms of biological role, involved in chemotaxis. Part of a chemotaxis signal transduction system that modulates chemotaxis in response to various stimuli. Catalyzes the demethylation of specific methylglutamate residues introduced into the chemoreceptors (methyl-accepting chemotaxis proteins or MCP) by CheR. Also mediates the irreversible deamidation of specific glutamine residues to glutamic acid. The sequence is that of Protein-glutamate methylesterase/protein-glutamine glutaminase from Pyrococcus abyssi (strain GE5 / Orsay).